The following is an 863-amino-acid chain: Paramyosin (863 aa).

The nonhelical region stretch occupies residues 1–18 (MSESHVKISRTIIRGTSP). The stretch at 19-836 (STVRLESRVR…ERTITIKRTI (818 aa)) forms a coiled coil. Residues 837 to 863 (GGPGSRAVSVVREINSVSRGNRATSIM) are nonhelical region.

This sequence belongs to the paramyosin family. As to quaternary structure, homodimer.

The protein localises to the cytoplasm. It is found in the myofibril. Functionally, paramyosin is a major structural component of many thick filaments isolated from invertebrate muscles. The protein is Paramyosin (PMY) of Taenia saginata (Beef tapeworm).